The following is a 323-amino-acid chain: MIEFGDFYRLIAKGPLSPWLDILPAQLSAWQRESLHGKFKTWFNAVEHLPQLTPTTLDLHSGVRAEMSPPISAGQREGMENMLRALMPWRKGPFSLYGLEIDTEWRSDWKWQRVLPHISPLAGRTILDVGCGSGYHLWRMIGEGAHLAVGIDPMQLFLCQFEAIRKLLGGDQRAHVLPLGIEQLPELAAFDTVFSMGVLYHRRSPLDHLYQLKNQLVTDGELVLETLVVEGDSQQVLVPGDRYAQMRNVYFIPSAPALKAWLEKCGFVDVRIADMAVTTTEEQRRTDWMTSESLAEFLDPHDHSKTVEGYPAPLRAVLIARKP.

Residues Lys91, Trp105, Lys110, Gly130, 181–182 (IE), Met196, Tyr200, and Arg315 each bind carboxy-S-adenosyl-L-methionine.

Belongs to the class I-like SAM-binding methyltransferase superfamily. CmoB family. As to quaternary structure, homotetramer.

It carries out the reaction carboxy-S-adenosyl-L-methionine + 5-hydroxyuridine(34) in tRNA = 5-carboxymethoxyuridine(34) in tRNA + S-adenosyl-L-homocysteine + H(+). Functionally, catalyzes carboxymethyl transfer from carboxy-S-adenosyl-L-methionine (Cx-SAM) to 5-hydroxyuridine (ho5U) to form 5-carboxymethoxyuridine (cmo5U) at position 34 in tRNAs. This is tRNA U34 carboxymethyltransferase from Yersinia pseudotuberculosis serotype IB (strain PB1/+).